The chain runs to 276 residues: MSEDMTYATLTFQDSVAAGNNQDRNNLRKRGYPAPSSIWRQAALGLLTLCVMLLIGLVTLGIMFLQMSSEINSDSDKLTQLQKIIHQQQDNISQQLSKYRNFPVEEEFLKSQISSLLKRQGQMAIKLCQELIIHTSDHKCNPCPKTWKWYQTSCYYFAVNEEKTWPNSRKNCMDKNSTLVKIDSLEEKDFLRSQPLPKFPFFWLGLSWDPSGRSWLWEDSSRPSPSLFSAYEYAQINESKGCAYFQNGNIYISRCSAEISWICEKTAALVKIEDLD.

Topologically, residues 1–43 (MSEDMTYATLTFQDSVAAGNNQDRNNLRKRGYPAPSSIWRQAA) are cytoplasmic. Residues 5–10 (MTYATL) carry the ITIM motif motif. A Phosphotyrosine modification is found at Y7. The chain crosses the membrane as a helical; Signal-anchor for type II membrane protein span at residues 44–64 (LGLLTLCVMLLIGLVTLGIMF). Residues 65-276 (LQMSSEINSD…AALVKIEDLD (212 aa)) are Extracellular-facing. N-linked (GlcNAc...) asparagine glycosylation is found at N91, N176, and N237. The 115-residue stretch at 150–264 (YQTSCYYFAV…CSAEISWICE (115 aa)) folds into the C-type lectin domain. Disulfide bonds link C172–C263 and C242–C255.

In terms of assembly, homodimer. Interacts (via ITIM motif) with PTPN6. Interacts (via ITIM motif) with PTPN11; this interaction triggers dephosphorylation and activation of PTPN11.

It is found in the cell membrane. Functionally, inhibitory receptor postulated to negatively regulate immune and non-immune functions. Upon phosphorylation, recruits SH2 domain-containing PTPN6 and PTPN11 phosphatases to its ITIM motif and antagonizes activation signals. Although it inhibits KLRK1/NKG2D-mediated signaling, it does not bind known ligands of KLRK1/NKG2D and therefore is not its inhibitory counterpart. May limit activation of myeloid cell subsets in response to infection or tissue inflammation. May protect target cells against natural killer cell-mediated lysis. May negatively regulate cell cycle and differentiation of melanocytes via inactivation of STAT3. This is C-type lectin domain family 12 member B (CLEC12B) from Bos taurus (Bovine).